Reading from the N-terminus, the 533-residue chain is Dipeptide-binding protein (533 aa).

Positions 1-24 (MRKILPLRAWLAAGLILGSPFSHA) are cleaved as a signal peptide.

It belongs to the bacterial solute-binding protein 5 family.

The protein localises to the periplasm. Binds different dipeptides. Probably bind only L-amino acid containing dipeptides. This chain is Dipeptide-binding protein, found in Pseudomonas aeruginosa (strain ATCC 15692 / DSM 22644 / CIP 104116 / JCM 14847 / LMG 12228 / 1C / PRS 101 / PAO1).